The sequence spans 1238 residues: DNA-directed RNA polymerase subunit beta (1238 aa).

This sequence belongs to the RNA polymerase beta chain family. In terms of assembly, the RNAP catalytic core consists of 2 alpha, 1 beta, 1 beta' and 1 omega subunit. When a sigma factor is associated with the core the holoenzyme is formed, which can initiate transcription.

The enzyme catalyses RNA(n) + a ribonucleoside 5'-triphosphate = RNA(n+1) + diphosphate. Its function is as follows. DNA-dependent RNA polymerase catalyzes the transcription of DNA into RNA using the four ribonucleoside triphosphates as substrates. This is DNA-directed RNA polymerase subunit beta from Clostridioides difficile (strain 630) (Peptoclostridium difficile).